A 314-amino-acid polypeptide reads, in one-letter code: Thioredoxin reductase aclD (314 aa).

FAD-binding positions include 13–16, 35–40, H47, and A112; these read GGPA and DSKSYR. A disulfide bond links C136 and C139. FAD-binding positions include D281 and 288-289; that span reads AA.

Belongs to the class-II pyridine nucleotide-disulfide oxidoreductase family. As to quaternary structure, homodimer. FAD serves as cofactor.

It functions in the pathway mycotoxin biosynthesis. Functionally, thioredoxin reductase; part of the gene cluster that mediates the biosynthesis of aspirochlorine (or antibiotic A30641), an unusual halogenated spiro compound with distinctive antifungal properties due to selective inhibition of protein biosynthesis, and which is also active against bacteria, viruses, and murine tumor cells. The non-ribosomal peptide synthetase (NRPS) aclP is responsible the formation of the diketopiperazine (DKP) core from the condensation of 2 phenylalanine residues. One Phe residue is tailored into chlorotyrosine by hydroxylation and chlorination, whereas the second Phe undergoes an unprecedented C-C bond cleavage to be converted into glycine. After formation of the DKP, sulfur is incorporated into the DKP by conjugation with glutathione by aclG, followed by its stepwise degradation to the thiol by aclI, aclJ and aclK, and the dithiol oxidation by aclT. In addition, oxygenases (aclB, aclC, aclL and aclO) and O-methyltransferases (aclM and aclU) act as tailoring enzymes to produce the intermediate dechloroaspirochlorine. Ultimately, chlorination of dechloroaspirochlorine by the halogenase aclH is the last step in the aspirochlorine pathway. The protein is Thioredoxin reductase aclD of Aspergillus oryzae (strain ATCC 42149 / RIB 40) (Yellow koji mold).